The chain runs to 375 residues: Chaperone protein DnaJ (375 aa).

The J domain maps to 4-68; it reads DYYEVLGVGK…QKRAQYDRFG (65 aa). Residues 129 to 211 form a CR-type zinc finger; the sequence is GKETDVEIPK…CRGSGRVKVR (83 aa). 8 residues coordinate Zn(2+): cysteine 142, cysteine 145, cysteine 159, cysteine 162, cysteine 185, cysteine 188, cysteine 199, and cysteine 202. CXXCXGXG motif repeat units follow at residues 142–149, 159–166, 185–192, and 199–206; these read CDTCHGSG, CKTCSGTG, CTTCEGKG, and CSSCRGSG. The interval 349 to 375 is disordered; the sequence is LSGEKPGQHGGEDEGFFEKMKRAFRGE.

This sequence belongs to the DnaJ family. As to quaternary structure, homodimer. Zn(2+) is required as a cofactor.

The protein localises to the cytoplasm. Participates actively in the response to hyperosmotic and heat shock by preventing the aggregation of stress-denatured proteins and by disaggregating proteins, also in an autonomous, DnaK-independent fashion. Unfolded proteins bind initially to DnaJ; upon interaction with the DnaJ-bound protein, DnaK hydrolyzes its bound ATP, resulting in the formation of a stable complex. GrpE releases ADP from DnaK; ATP binding to DnaK triggers the release of the substrate protein, thus completing the reaction cycle. Several rounds of ATP-dependent interactions between DnaJ, DnaK and GrpE are required for fully efficient folding. Also involved, together with DnaK and GrpE, in the DNA replication of plasmids through activation of initiation proteins. The sequence is that of Chaperone protein DnaJ from Brevibacillus choshinensis.